The following is a 309-amino-acid chain: Probable manganese-dependent inorganic pyrophosphatase (309 aa).

Residues histidine 9, aspartate 13, aspartate 15, aspartate 75, histidine 97, and aspartate 149 each coordinate Mn(2+).

This sequence belongs to the PPase class C family. Mn(2+) is required as a cofactor.

Its subcellular location is the cytoplasm. It catalyses the reaction diphosphate + H2O = 2 phosphate + H(+). The sequence is that of Probable manganese-dependent inorganic pyrophosphatase from Bacillus cereus (strain ZK / E33L).